The following is a 124-amino-acid chain: Large ribosomal subunit protein bL12 (124 aa).

The protein belongs to the bacterial ribosomal protein bL12 family. In terms of assembly, homodimer. Part of the ribosomal stalk of the 50S ribosomal subunit. Forms a multimeric L10(L12)X complex, where L10 forms an elongated spine to which 2 to 4 L12 dimers bind in a sequential fashion. Binds GTP-bound translation factors.

In terms of biological role, forms part of the ribosomal stalk which helps the ribosome interact with GTP-bound translation factors. Is thus essential for accurate translation. The chain is Large ribosomal subunit protein bL12 from Herminiimonas arsenicoxydans.